Consider the following 95-residue polypeptide: Large ribosomal subunit protein bL27 (95 aa).

Residues 1–24 form a disordered region; that stretch reads MAHKKGTGSTRNGRDSNSQRLGVK. A compositionally biased stretch (polar residues) spans 7–20; the sequence is TGSTRNGRDSNSQR.

The protein belongs to the bacterial ribosomal protein bL27 family.

The chain is Large ribosomal subunit protein bL27 from Trichodesmium erythraeum (strain IMS101).